Reading from the N-terminus, the 433-residue chain is Aspartate--tRNA(Asp/Asn) ligase (433 aa).

Position 167 (Glu167) interacts with L-aspartate. Residues 189–192 (QLFK) are aspartate. Residue Arg211 coordinates L-aspartate. Residues 211–213 (RAE), 219–221 (RHL), and Glu356 each bind ATP. Mg(2+)-binding residues include Glu356 and Ser359. L-aspartate-binding residues include Ser359 and Arg363. 404-407 (GGER) is an ATP binding site.

Belongs to the class-II aminoacyl-tRNA synthetase family. Type 2 subfamily. As to quaternary structure, homodimer. Mg(2+) is required as a cofactor.

It is found in the cytoplasm. It carries out the reaction tRNA(Asx) + L-aspartate + ATP = L-aspartyl-tRNA(Asx) + AMP + diphosphate. Its function is as follows. Aspartyl-tRNA synthetase with relaxed tRNA specificity since it is able to aspartylate not only its cognate tRNA(Asp) but also tRNA(Asn). Reaction proceeds in two steps: L-aspartate is first activated by ATP to form Asp-AMP and then transferred to the acceptor end of tRNA(Asp/Asn). This chain is Aspartate--tRNA(Asp/Asn) ligase, found in Haloferax volcanii (Halobacterium volcanii).